The sequence spans 488 residues: F-box protein At3g60790 (488 aa).

Residues 1 to 21 (MTTQSSSSSSSLPSSLSSTPP) form a disordered region. An F-box domain is found at 49-95 (VDRISMLPDEMLQKILSTLSTKDAVITSTLSKRWVDQWKRIPHLCVD).

The polypeptide is F-box protein At3g60790 (Arabidopsis thaliana (Mouse-ear cress)).